We begin with the raw amino-acid sequence, 166 residues long: UPF0303 protein Avin_29320 (166 aa).

It belongs to the UPF0303 family.

This is UPF0303 protein Avin_29320 from Azotobacter vinelandii (strain DJ / ATCC BAA-1303).